Here is a 290-residue protein sequence, read N- to C-terminus: Xylanase inhibitor protein 2 (290 aa).

An N-terminal signal peptide occupies residues 1-27 (MGLVHALLPFAAAAALLLLAAPPPATA). One can recognise a GH18 domain in the interval 30–290 (PGLAVYWGRH…DKKANYTGEG (261 aa)). A disulfide bridge connects residues Cys49 and Cys89. N-linked (GlcNAc...) asparagine glycosylation is present at Asn112. Cys187 and Cys216 are oxidised to a cystine. Asn285 carries N-linked (GlcNAc...) asparagine glycosylation.

Belongs to the glycosyl hydrolase 18 family. Xylanase inhibitor subfamily. As to quaternary structure, binds to fungal GH10 xylanases.

Its subcellular location is the secreted. In terms of biological role, fungal xylanase inhibitor. Possesses competitive inhibiting activity against several fungal endo-1,4-beta-D-xylanases belonging to glycoside hydrolase family 10 (GH10) and family 11 (GH11). May function in plant defense against secreted fungal pathogen xylanases. Is similar to class III chitinases, but does not exhibit chitinase activity. The protein is Xylanase inhibitor protein 2 of Oryza sativa subsp. japonica (Rice).